A 72-amino-acid polypeptide reads, in one-letter code: Probable protein transport protein Sec61 subunit gamma (72 aa).

Over 1 to 40 (MSQKLQKPSFLSEYLRSIRLFSKKCVRPSGKELSMSIKRH) the chain is Cytoplasmic. A helical transmembrane segment spans residues 41–61 (AIGIGFLGILGYAIKLIHIPI). Topologically, residues 62 to 72 (NNIIVSSPGKE) are extracellular.

It belongs to the SecE/SEC61-gamma family. As to quaternary structure, heterotrimeric complex composed of SEC61-alpha, SEC61-beta and SEC61-gamma.

The protein localises to the endoplasmic reticulum membrane. Its function is as follows. Necessary for protein translocation in the endoplasmic reticulum. This is Probable protein transport protein Sec61 subunit gamma from Encephalitozoon cuniculi (strain GB-M1) (Microsporidian parasite).